Here is a 532-residue protein sequence, read N- to C-terminus: Muscarinic acetylcholine receptor M5 (532 aa).

Residues 1-29 are Extracellular-facing; sequence MEGDSYHNATTVNGTPVNHQPLERHRLWE. N8 carries N-linked (GlcNAc...) asparagine glycosylation. The helical transmembrane segment at 30 to 53 threads the bilayer; the sequence is VITIAAVTAVVSLITIVGNVLVMI. The Cytoplasmic segment spans residues 54–66; the sequence is SFKVNSQLKTVNN. Residues 67-87 traverse the membrane as a helical segment; sequence YYLLSLACADLIIGIFSMNLY. The Extracellular portion of the chain corresponds to 88 to 104; sequence TTYILMGRWALGSLACD. A disulfide bridge connects residues C103 and C183. The chain crosses the membrane as a helical span at residues 105–126; that stretch reads LWLALDYVASNASVMNLLVISF. The Cytoplasmic portion of the chain corresponds to 127–146; the sequence is DRYFSITRPLTYRAKRTPKR. A helical membrane pass occupies residues 147-169; that stretch reads AGIMIGLAWLISFILWAPAILCW. Topologically, residues 170–191 are extracellular; it reads QYLVGKRTVPLDECQIQFLSEP. Residues 192–214 traverse the membrane as a helical segment; the sequence is TITFGTAIAAFYIPVSVMTILYC. The Cytoplasmic portion of the chain corresponds to 215–443; it reads RIYRETEKRT…LVKERKAAQT (229 aa). Positions 262–294 are disordered; the sequence is AQRERNQASWSSSRRSTSTTGKPSQATGPSANW. A compositionally biased stretch (low complexity) spans 270–281; it reads SWSSSRRSTSTT. Residues 282 to 291 are compositionally biased toward polar residues; sequence GKPSQATGPS. The helical transmembrane segment at 444 to 464 threads the bilayer; it reads LSAILLAFIITWTPYNIMVLV. Residues 465–478 lie on the Extracellular side of the membrane; sequence STFCDKCVPVTLWH. A helical membrane pass occupies residues 479-498; it reads LGYWLCYVNSTVNPICYALC. The Cytoplasmic segment spans residues 499-532; that stretch reads NRTFRKTFKMLLLCRWKKKKVEEKLYWQGNSKLP. Residues T501 and T505 each carry the phosphothreonine modification.

This sequence belongs to the G-protein coupled receptor 1 family. Muscarinic acetylcholine receptor subfamily. CHRM5 sub-subfamily.

The protein resides in the cell membrane. It localises to the postsynaptic cell membrane. Its function is as follows. The muscarinic acetylcholine receptor mediates various cellular responses, including inhibition of adenylate cyclase, breakdown of phosphoinositides and modulation of potassium channels through the action of G proteins. Primary transducing effect is Pi turnover. The protein is Muscarinic acetylcholine receptor M5 (CHRM5) of Homo sapiens (Human).